The sequence spans 184 residues: RNA 2',3'-cyclic phosphodiesterase (184 aa).

His-42 functions as the Proton donor in the catalytic mechanism. 2 consecutive short sequence motifs (HXTX) follow at residues 42–45 (HFTL) and 127–130 (HLTV). The active-site Proton acceptor is His-127.

Belongs to the 2H phosphoesterase superfamily. ThpR family.

It carries out the reaction a 3'-end 2',3'-cyclophospho-ribonucleotide-RNA + H2O = a 3'-end 2'-phospho-ribonucleotide-RNA + H(+). Hydrolyzes RNA 2',3'-cyclic phosphodiester to an RNA 2'-phosphomonoester. This chain is RNA 2',3'-cyclic phosphodiesterase, found in Methanothermobacter thermautotrophicus (strain ATCC 29096 / DSM 1053 / JCM 10044 / NBRC 100330 / Delta H) (Methanobacterium thermoautotrophicum).